The chain runs to 133 residues: Small ribosomal subunit protein uS8c (133 aa).

Disordered regions lie at residues 1–23 (MGND…GAET) and 44–133 (FSGN…HVWR). Composition is skewed to polar residues over residues 12–23 (APRNASSRGAET) and 55–66 (TNRFPVSTSKYQ). A compositionally biased stretch (basic residues) spans 67-81 (GRTRKARITTRRRVS). Basic and acidic residues predominate over residues 114–133 (TDREARQKRIGGEAPRHVWR).

This sequence belongs to the universal ribosomal protein uS8 family. As to quaternary structure, part of the 30S ribosomal subunit.

The protein resides in the plastid. It is found in the chloroplast. Functionally, one of the primary rRNA binding proteins, it binds directly to 16S rRNA central domain where it helps coordinate assembly of the platform of the 30S subunit. This Selaginella uncinata (Blue spike-moss) protein is Small ribosomal subunit protein uS8c (rps8).